Reading from the N-terminus, the 246-residue chain is 33kDa venom protein (246 aa).

Residues 1-20 form the signal peptide; that stretch reads MAGKEVIFIMALFIAVESSP. A run of 7 repeats spans residues 83–96, 97–110, 111–124, 125–138, 139–152, 153–166, and 167–180. Positions 83 to 243 are 12 X approximate tandem repeats of [AV][DE]X[VL]SGSX[DE]QX[KR]X[ST]; the sequence is GGAVSESVKQ…SGSVGNDDDI (161 aa). The segment at 88–246 is disordered; that stretch reads ESVKQKRETA…VGNDDDISVQ (159 aa). Over residues 112 to 123 the composition is skewed to polar residues; that stretch reads ENLSGSFDQQKS. Residues 175–186 show a composition bias toward basic and acidic residues; sequence DKQKVTVEEKSE. One copy of the 8; half-length repeat lies at 181-187; sequence VEEKSEP. 4 tandem repeats follow at residues 188-201, 202-215, 216-229, and 230-243. Polar residues predominate over residues 217–228; the sequence is ESLSGSFDQQKS.

As to expression, expressed by the venom gland.

The protein resides in the secreted. In Chelonus sp. nr. curvimaculatus (Parasitic wasp), this protein is 33kDa venom protein.